Reading from the N-terminus, the 282-residue chain is sn-glycerol-3-phosphate transport system permease protein UgpE (282 aa).

Helical transmembrane passes span 14-34 (LMLI…FVAS), 86-106 (IAIA…IVFF), 112-132 (MAFF…RILP), 136-156 (VIVD…LMAS), 201-221 (IAAL…WPLL), and 248-268 (WNYV…VVVL). The 192-residue stretch at 78–269 (LFNTFVVAIA…IPPVAVVVLM (192 aa)) folds into the ABC transmembrane type-1 domain.

Belongs to the binding-protein-dependent transport system permease family. In terms of assembly, the complex is composed of two ATP-binding proteins (UgpC), two transmembrane proteins (UgpA and UgpE) and a solute-binding protein (UgpB).

Its subcellular location is the cell inner membrane. Its function is as follows. Part of the ABC transporter complex UgpBAEC involved in sn-glycerol-3-phosphate (G3P) import. Probably responsible for the translocation of the substrate across the membrane. This chain is sn-glycerol-3-phosphate transport system permease protein UgpE (ugpE), found in Rhizobium meliloti (strain 1021) (Ensifer meliloti).